Reading from the N-terminus, the 394-residue chain is Phosphoglycerate kinase (394 aa).

Substrate contacts are provided by residues 21–23 (DLN), R37, 60–63 (HLGR), R115, and R148. Residues K199, E321, and 347-350 (GGDT) contribute to the ATP site.

Belongs to the phosphoglycerate kinase family. As to quaternary structure, monomer.

It localises to the cytoplasm. It carries out the reaction (2R)-3-phosphoglycerate + ATP = (2R)-3-phospho-glyceroyl phosphate + ADP. Its pathway is carbohydrate degradation; glycolysis; pyruvate from D-glyceraldehyde 3-phosphate: step 2/5. In Azoarcus sp. (strain BH72), this protein is Phosphoglycerate kinase.